Consider the following 311-residue polypeptide: Malate dehydrogenase (311 aa).

NAD(+) contacts are provided by residues 7 to 13 and aspartate 34; that span reads GAAGGIG. Substrate contacts are provided by arginine 81 and arginine 87. NAD(+) is bound by residues asparagine 94 and 117 to 119; that span reads ITN. Substrate contacts are provided by asparagine 119 and arginine 153. Histidine 177 (proton acceptor) is an active-site residue. Methionine 227 contributes to the NAD(+) binding site.

This sequence belongs to the LDH/MDH superfamily. MDH type 1 family. In terms of assembly, homodimer.

It carries out the reaction (S)-malate + NAD(+) = oxaloacetate + NADH + H(+). Catalyzes the reversible oxidation of malate to oxaloacetate. This Shewanella pealeana (strain ATCC 700345 / ANG-SQ1) protein is Malate dehydrogenase.